We begin with the raw amino-acid sequence, 133 residues long: Fatty acid-binding protein, heart (133 aa).

A2 bears the N-acetylalanine mark. At T8 the chain carries Phosphothreonine. Position 20 is a phosphotyrosine; by Tyr-kinases (Y20). S23 is subject to Phosphoserine. T30 is subject to Phosphothreonine. S83 carries the post-translational modification Phosphoserine. 127-129 (RTY) contributes to the (9Z)-octadecenoate binding site. 127-129 (RTY) contacts hexadecanoate. Residue 127-129 (RTY) coordinates octadecanoate.

This sequence belongs to the calycin superfamily. Fatty-acid binding protein (FABP) family.

The protein localises to the cytoplasm. Its function is as follows. FABPs are thought to play a role in the intracellular transport of long-chain fatty acids and their acyl-CoA esters. FABPs are important elements related to the hibernating state in mammals. This chain is Fatty acid-binding protein, heart (FABP3), found in Myotis lucifugus (Little brown bat).